The chain runs to 446 residues: Phosphoglucosamine mutase (446 aa).

Catalysis depends on Ser-100, which acts as the Phosphoserine intermediate. Mg(2+) contacts are provided by Ser-100, Asp-241, Asp-243, and Asp-245. Ser-100 carries the phosphoserine modification.

The protein belongs to the phosphohexose mutase family. The cofactor is Mg(2+). In terms of processing, activated by phosphorylation.

It carries out the reaction alpha-D-glucosamine 1-phosphate = D-glucosamine 6-phosphate. In terms of biological role, catalyzes the conversion of glucosamine-6-phosphate to glucosamine-1-phosphate. In Methylorubrum populi (strain ATCC BAA-705 / NCIMB 13946 / BJ001) (Methylobacterium populi), this protein is Phosphoglucosamine mutase.